The following is a 484-amino-acid chain: Cobyric acid synthase (484 aa).

Residues 251–438 (ALKVAVPVLS…LHGLFGSDAY (188 aa)) form the GATase cobBQ-type domain. Cysteine 333 serves as the catalytic Nucleophile. Histidine 430 is an active-site residue.

This sequence belongs to the CobB/CobQ family. CobQ subfamily.

It participates in cofactor biosynthesis; adenosylcobalamin biosynthesis. Functionally, catalyzes amidations at positions B, D, E, and G on adenosylcobyrinic A,C-diamide. NH(2) groups are provided by glutamine, and one molecule of ATP is hydrogenolyzed for each amidation. The sequence is that of Cobyric acid synthase from Sinorhizobium fredii (strain NBRC 101917 / NGR234).